Here is a 173-residue protein sequence, read N- to C-terminus: Shikimate kinase 1 (173 aa).

G14–T19 provides a ligand contact to ATP. Residue S18 coordinates Mg(2+). Positions 36, 60, and 82 each coordinate substrate. Residue R120 coordinates ATP. R140 provides a ligand contact to substrate. Residue Q157 participates in ATP binding.

Belongs to the shikimate kinase family. In terms of assembly, monomer. It depends on Mg(2+) as a cofactor.

The protein localises to the cytoplasm. The catalysed reaction is shikimate + ATP = 3-phosphoshikimate + ADP + H(+). The protein operates within metabolic intermediate biosynthesis; chorismate biosynthesis; chorismate from D-erythrose 4-phosphate and phosphoenolpyruvate: step 5/7. Functionally, catalyzes the specific phosphorylation of the 3-hydroxyl group of shikimic acid using ATP as a cosubstrate. This Sodalis glossinidius (strain morsitans) protein is Shikimate kinase 1.